Reading from the N-terminus, the 282-residue chain is MSTYLIGDVHGCYDELIALLAQVEFDPSTDTLWLTGDLVARGPGSLEVLRYVKSLGDSVRLVLGNHDLHLLAVFAGISRNKPKDRLKSLLEAPDADELLNWLRRQPLLQVDEEKKLVMAHAGITPQWDLETAQQCARDVEAVLSSDSYPFFLDAMYGDMPNHWSNELSGLARLRFISNAFTRMRYCFPNGQLDMYSKEAPEDAPAPLKPWFAIPGPVSNAYSIAFGHWASLEGRGTPEGIYALDTGCCWGGELTCLRWEDKQYFTQPSNRQKSLDEGEAVAS.

This sequence belongs to the Ap4A hydrolase family.

The enzyme catalyses P(1),P(4)-bis(5'-adenosyl) tetraphosphate + H2O = 2 ADP + 2 H(+). Hydrolyzes diadenosine 5',5'''-P1,P4-tetraphosphate to yield ADP. This Klebsiella pneumoniae (strain 342) protein is Bis(5'-nucleosyl)-tetraphosphatase, symmetrical.